The primary structure comprises 942 residues: Mitogen-activated protein kinase kinase kinase A (942 aa).

In terms of domain architecture, PB1 spans 15 to 96 (FIRIKCILGD…NPTKIISTKF (82 aa)). The disordered stretch occupies residues 107–144 (PLSSSLSPTQSLILNNNNNNNNNNNNNNNNNNNNNNNN). In terms of domain architecture, Protein kinase spans 170–429 (WQKGQILGRG…ANQLLKHPFI (260 aa)). ATP is bound by residues 176–184 (LGRGGYGSV) and lysine 199. The active-site Proton acceptor is aspartate 297. The span at 441-486 (ISPTTTLSTNTTNTTATTTTTNNATNSNINQQQQQQQQQPPTRTQR) shows a compositional bias: low complexity. Residues 441-512 (ISPTTTLSTN…ISTSTSSSSS (72 aa)) are disordered. Residues 487–498 (VSISAGSSNNKR) are compositionally biased toward polar residues. Positions 500–512 (TPPISTSTSSSSS) are enriched in low complexity. A helical membrane pass occupies residues 513 to 533 (SILNNFSINIILPINLIILIF). An F-box domain is found at 518–564 (FSINIILPINLIILIFREIKPNFVNTLSRVCKHWKQIIDDDELWNKY). 7 WD repeats span residues 607–646 (GHDK…HHNH), 690–733 (GHSG…TLFT), 736–778 (NHQE…STLR), 780–825 (HTGG…KVRS), 828–865 (QHTE…TIST), 872–909 (RQKN…DSRS), and 912–942 (GHHE…WSID).

This sequence belongs to the protein kinase superfamily. STE Ser/Thr protein kinase family. MAP kinase kinase kinase subfamily. As to quaternary structure, interacts with ubcB and ubpB. It depends on Mg(2+) as a cofactor. In terms of processing, ubcB and ubpB differentially control ubiquitination/deubiquitination and degradation in a cell-type-specific and temporally regulated manner.

The protein resides in the membrane. It carries out the reaction L-seryl-[protein] + ATP = O-phospho-L-seryl-[protein] + ADP + H(+). The enzyme catalyses L-threonyl-[protein] + ATP = O-phospho-L-threonyl-[protein] + ADP + H(+). Functionally, regulates cell-type differentiation and spatial patterning, required for the proper induction and maintenance of prespore cell differentiation. The sequence is that of Mitogen-activated protein kinase kinase kinase A from Dictyostelium discoideum (Social amoeba).